The chain runs to 301 residues: TLR adapter interacting with SLC15A4 on the lysosome (301 aa).

The pLxIS motif signature appears at Ser-290–Ser-294. Ser-294 is subject to Phosphoserine.

In terms of assembly, interacts (via pLxIS motif) with IRF5; leading to IRF5 activation. Interacts with SLC15A4; leading to its recruitment to endolysosome. In terms of processing, the phosphorylated pLxIS motif constitutes an IRF5-binding motif, leading to recruitment of the transcription factor IRF5 to induce type-I interferons and other cytokines. In terms of tissue distribution, highly expressed in immune cell types such as B-cells, neutrophils, dendritic cells and monocytes, the expression levels are two-three-fold higher in female cells compared to male cells (at protein level). Expressed at low levels in T-cells and NK cells.

It localises to the lysosome membrane. The protein localises to the endosome membrane. The protein resides in the nucleus. It is found in the cytoplasm. Innate immune adapter that mediates the recruitment and activation of IRF5 downstream of endolysosomal toll-like receptors TLR7, TLR8 and TLR9. Following recruitment to endolysosome by SLC15A4 downstream of TLR7, TLR8 and TLR9, specifically recruits IRF5 transcription factor via its pLxIS motif, leading to IRF5 activation and subsequent expression of type I interferons. Plays a role in the regulation of endolysosomal pH in immune cells such as B-cells, dendritic cells and monocytes. In Homo sapiens (Human), this protein is TLR adapter interacting with SLC15A4 on the lysosome.